The primary structure comprises 327 residues: Phenylalanine--tRNA ligase alpha subunit (327 aa).

Mg(2+) is bound at residue Glu252.

The protein belongs to the class-II aminoacyl-tRNA synthetase family. Phe-tRNA synthetase alpha subunit type 1 subfamily. Tetramer of two alpha and two beta subunits. Mg(2+) serves as cofactor.

The protein localises to the cytoplasm. It catalyses the reaction tRNA(Phe) + L-phenylalanine + ATP = L-phenylalanyl-tRNA(Phe) + AMP + diphosphate + H(+). In Yersinia pestis bv. Antiqua (strain Antiqua), this protein is Phenylalanine--tRNA ligase alpha subunit.